Reading from the N-terminus, the 155-residue chain is S-ribosylhomocysteine lyase (155 aa).

Residues H57, H61, and C124 each coordinate Fe cation.

This sequence belongs to the LuxS family. As to quaternary structure, homodimer. It depends on Fe cation as a cofactor.

It catalyses the reaction S-(5-deoxy-D-ribos-5-yl)-L-homocysteine = (S)-4,5-dihydroxypentane-2,3-dione + L-homocysteine. Involved in the synthesis of autoinducer 2 (AI-2) which is secreted by bacteria and is used to communicate both the cell density and the metabolic potential of the environment. The regulation of gene expression in response to changes in cell density is called quorum sensing. Catalyzes the transformation of S-ribosylhomocysteine (RHC) to homocysteine (HC) and 4,5-dihydroxy-2,3-pentadione (DPD). The sequence is that of S-ribosylhomocysteine lyase from Listeria monocytogenes serovar 1/2a (strain ATCC BAA-679 / EGD-e).